The primary structure comprises 262 residues: MRREKGFQVPTDGTVIYVPPGIQETRLATRSLAWVDCCRVALHTYGAVGWQLAGLTALLSAFCYAAPATWFHHSRLCLTESSPSLVFVIPVTSVIFIHCYETSHPSNIGVLLFYTLLHVPPLIVICLCLDGTLVISAALFTLLAFLSCTGVALLAPERTVRRQIVVVHALITLTFTAIVVVILRRGWSWCFKIVLSFSVLITCLAVSHFHEAALAVRYETPLERALLAAVKVFLSLVFTLLMVLRIMTLRTFLQTYFSSDKL.

Helical transmembrane passes span 46–66 (GAVG…CYAA), 77–97 (CLTE…VIFI), 108–128 (IGVL…ICLC), 133–153 (LVIS…GVAL), 163–183 (QIVV…VVIL), 186–206 (GWSW…CLAV), and 226–246 (LLAA…VLRI).

It belongs to the cytomegalovirus US12 family.

Its subcellular location is the membrane. This is an uncharacterized protein from Homo sapiens (Human).